A 138-amino-acid chain; its full sequence is Large ribosomal subunit protein uL14 (138 aa).

Belongs to the universal ribosomal protein uL14 family. As to quaternary structure, part of the 50S ribosomal subunit. Forms a cluster with proteins L3 and L24e, part of which may contact the 16S rRNA in 2 intersubunit bridges. Contacts initiation factor aIF-6.

The protein localises to the cytoplasm. Binds to 23S rRNA. Forms part of two intersubunit bridges in the 70S ribosome. In Saccharolobus solfataricus (strain ATCC 35092 / DSM 1617 / JCM 11322 / P2) (Sulfolobus solfataricus), this protein is Large ribosomal subunit protein uL14.